A 150-amino-acid chain; its full sequence is Large ribosomal subunit protein bL9 (150 aa).

It belongs to the bacterial ribosomal protein bL9 family.

Functionally, binds to the 23S rRNA. The sequence is that of Large ribosomal subunit protein bL9 from Streptococcus equi subsp. equi (strain 4047).